We begin with the raw amino-acid sequence, 227 residues long: Orotate phosphoribosyltransferase (227 aa).

Lys34 contributes to the 5-phospho-alpha-D-ribose 1-diphosphate binding site. Phe42–Phe43 lines the orotate pocket. 5-phospho-alpha-D-ribose 1-diphosphate is bound by residues Tyr80–Lys81, Arg106, Lys107, Lys110, His112, and Asp131–Ser139. Orotate is bound by residues Ser135 and Arg163.

It belongs to the purine/pyrimidine phosphoribosyltransferase family. PyrE subfamily. As to quaternary structure, homodimer. Mg(2+) serves as cofactor.

It carries out the reaction orotidine 5'-phosphate + diphosphate = orotate + 5-phospho-alpha-D-ribose 1-diphosphate. Its pathway is pyrimidine metabolism; UMP biosynthesis via de novo pathway; UMP from orotate: step 1/2. Its function is as follows. Catalyzes the transfer of a ribosyl phosphate group from 5-phosphoribose 1-diphosphate to orotate, leading to the formation of orotidine monophosphate (OMP). In Cupriavidus necator (strain ATCC 17699 / DSM 428 / KCTC 22496 / NCIMB 10442 / H16 / Stanier 337) (Ralstonia eutropha), this protein is Orotate phosphoribosyltransferase.